The following is a 514-amino-acid chain: Bifunctional purine biosynthesis protein PurH (514 aa).

In terms of domain architecture, MGS-like spans 1–146; the sequence is MARLALLSVS…KNFAHLAVLC (146 aa).

This sequence belongs to the PurH family.

The enzyme catalyses (6R)-10-formyltetrahydrofolate + 5-amino-1-(5-phospho-beta-D-ribosyl)imidazole-4-carboxamide = 5-formamido-1-(5-phospho-D-ribosyl)imidazole-4-carboxamide + (6S)-5,6,7,8-tetrahydrofolate. It catalyses the reaction IMP + H2O = 5-formamido-1-(5-phospho-D-ribosyl)imidazole-4-carboxamide. It functions in the pathway purine metabolism; IMP biosynthesis via de novo pathway; 5-formamido-1-(5-phospho-D-ribosyl)imidazole-4-carboxamide from 5-amino-1-(5-phospho-D-ribosyl)imidazole-4-carboxamide (10-formyl THF route): step 1/1. The protein operates within purine metabolism; IMP biosynthesis via de novo pathway; IMP from 5-formamido-1-(5-phospho-D-ribosyl)imidazole-4-carboxamide: step 1/1. This is Bifunctional purine biosynthesis protein PurH from Nostoc punctiforme (strain ATCC 29133 / PCC 73102).